Here is a 203-residue protein sequence, read N- to C-terminus: Inositol diphosphatase DSP3 (203 aa).

A Tyrosine-protein phosphatase domain is found at 20 to 169; that stretch reads NFSMVEDGIY…FDIVSLRQCL (150 aa). The segment at 76 to 88 is WPD loop important for active site topology; it reads FGIEGKTDPPTPM. The active-site Phosphocysteine intermediate is the C112.

It belongs to the protein-tyrosine phosphatase family. Atypical dual-specificity phosphatase Siw14-like subfamily. Interacts with FLZ1. In terms of tissue distribution, highly expressed in roots, stems and flowers. Expressed at low levels in leaves and siliques.

The protein localises to the nucleus. It catalyses the reaction 5-diphospho-1D-myo-inositol 1,2,3,4,6-pentakisphosphate + H2O = 1D-myo-inositol hexakisphosphate + phosphate + H(+). It carries out the reaction 1,5-bis(diphospho)-1D-myo-inositol 2,3,4,6-tetrakisphosphate + H2O = 1-diphospho-1D-myo-inositol 2,3,4,5,6-pentakisphosphate + phosphate + 2 H(+). The catalysed reaction is 3,5-bis(diphospho)-1D-myo-inositol 1,2,4,6-tetrakisphosphate + H2O = 3-diphospho-1D-myo-inositol 1,2,4,5,6-pentakisphosphate + phosphate + 2 H(+). The enzyme catalyses 6-diphospho-1D-myo-inositol pentakisphosphate + H2O = 1D-myo-inositol hexakisphosphate + phosphate + H(+). In terms of biological role, cleaves the beta-phosphate at the 5-position of soluble inositol pyrophosphates. Has highest activity on 5-diphosphoinositol 1,2,3,4,6-pentakisphosphate (5-InsP(7)), 1,5-bis-diphosphoinositol 2,3,4,6-tetrakisphosphate (1,5-InsP(8)) and 3,5-InsP(8). Possesses phosphotyrosine phosphatase activity in vitro. Dephosphorylates the phosphoinositides PI(3,5)P2. Hydrolyzes para-nitrophenyl phosphate and O-methylfluorescein phosphate in vitro. This Arabidopsis thaliana (Mouse-ear cress) protein is Inositol diphosphatase DSP3.